The chain runs to 668 residues: MEQGPQDGEPIEIKIIKEAYKKAFVFVNKGLNTDELGQKEEAKNYYKQGIGHLLRGISISSTDPEYTGPEWESARQMQQKMKETLQNVRTRLEILEKGLATSLRNDLQEVPKLYPEFPPKDMSEKSPEPQSLSSLPQHSEVNGSTSTASAESSSTPTTLSLPCQSHPSEAPPAYTPQAAEGHYTVSYGTESGEFSSVGENFYRNHSQPPPLETLGLDADELILIPNGVQIFFVNPAGEVSAPSYPGYLRIVRFLDNSLDTFLNRPPGFLQVCDWLYPLVPDRSPVLKCTVGAYMFPDTMLQASGCFVGVVLSSELPEDDRELFEDLLRQMSDLRLQTNWDRAEGENEFQIPGISGSASDQLKEASGTDVRQLDPSSKDVRQKGKRGKKTKGTSSEEVNLSHIVPCEPVSEEKAKELPEWSEKVAHNILSGASWVSWGLVKGAEFTGKAIQKGASKLRERIQPEEKPVEVSPAVTKGLYMAKQATGGAAKVSQFLVDGVCTVANCVGKELAPHVKKHGSKLVPESLKKDRNGKSTLDGAMVVAASSVQGFSTVWQGLECAAKCIVNNVSAETVQTVRYKYGHTAGEATHNAVDSAINVGVTAYNIDNIGIKAMVKKTAKQTGHTLLEDYKIIDNSKGENPGGGASANLKGEKDEQKEGPEKNGAKKKDK.

Met1 is subject to N-acetylmethionine. One can recognise an MIT domain in the interval 16-94 (IKEAYKKAFV…LQNVRTRLEI (79 aa)). The tract at residues 110-176 (VPKLYPEFPP…PSEAPPAYTP (67 aa)) is disordered. Positions 118 to 127 (PPKDMSEKSP) are enriched in basic and acidic residues. Residue Ser126 is modified to Phosphoserine. The segment covering 128 to 162 (EPQSLSSLPQHSEVNGSTSTASAESSSTPTTLSLP) has biased composition (low complexity). Residues 190–380 (ESGEFSSVGE…QLDPSSKDVR (191 aa)) are ubiquitin-binding region (UBR) domain. The LC3-interacting region (LIR); mediates interaction with MAP1LC3A AND MAP1LC3C signature appears at 193–200 (EFSSVGEN). The tract at residues 348-396 (FQIPGISGSASDQLKEASGTDVRQLDPSSKDVRQKGKRGKKTKGTSSEE) is disordered. Lys362 participates in a covalent cross-link: Glycyl lysine isopeptide (Lys-Gly) (interchain with G-Cter in ubiquitin). In terms of domain architecture, Senescence spans 427 to 611 (ILSGASWVSW…YNIDNIGIKA (185 aa)). The tract at residues 431 to 503 (ASWVSWGLVK…LVDGVCTVAN (73 aa)) is required for localization to lipid droplets. Position 470 is a phosphoserine (Ser470). The segment at 631–668 (IDNSKGENPGGGASANLKGEKDEQKEGPEKNGAKKKDK) is disordered. The segment covering 648 to 668 (KGEKDEQKEGPEKNGAKKKDK) has biased composition (basic and acidic residues).

As to quaternary structure, interacts with ITCH and WWP1. Interacts (via MIT domain) with IST1; leading to the recruitment of SPART to midbodies. Interacts with MAP1LC3A and MAP1LC3C. Post-translationally, ubiquitinated; ubiquitination does not require ITCH and WWP1.

It is found in the cytoplasm. The protein localises to the midbody. Its subcellular location is the lipid droplet. Lipophagy receptor that plays an important role in lipid droplet (LD) turnover in motor neurons. Localizes to LDs and interacts with components of the autophagy machinery, such as MAP1LC3A/C proteins to deliver LDs to autophagosomes for degradation via lipophagy. Lipid transfer protein required for lipid droplet degradation, including by lipophagy. Can bind and transfer all lipid species found in lipid droplets, from phospholipids to triglycerides and sterol esters but the direction of lipid transfer by spartin and its cargos are unknown. May be implicated in endosomal trafficking, or microtubule dynamics, or both. Participates in cytokinesis. This is Spartin from Bos taurus (Bovine).